Reading from the N-terminus, the 243-residue chain is MSETHFGFEKVDESEKAGKVAGVFHSVASKYDVMNDLMSGGMHRLWKVFTIAQANVRPGQKVLDIAGGTGDLAKAFAKQAGPTGEVWLTDINESMLRVGRDRLLNKGVVTPVALCDAERIPFPDNYFDLVTVAFGLRNMTHKDAALAEMRRVIKPGGKVMVLEFSKVWKPLEKFYDVYSFKVLPWLGERVAGDAPSYRYLAESIRMHPDQGSLVRMMEQVGLEQVEYFNLTAGVVALHVGRKY.

S-adenosyl-L-methionine is bound by residues Thr69, Asp90, and 116-117; that span reads DA.

Belongs to the class I-like SAM-binding methyltransferase superfamily. MenG/UbiE family.

The catalysed reaction is a 2-demethylmenaquinol + S-adenosyl-L-methionine = a menaquinol + S-adenosyl-L-homocysteine + H(+). It catalyses the reaction a 2-methoxy-6-(all-trans-polyprenyl)benzene-1,4-diol + S-adenosyl-L-methionine = a 5-methoxy-2-methyl-3-(all-trans-polyprenyl)benzene-1,4-diol + S-adenosyl-L-homocysteine + H(+). It participates in quinol/quinone metabolism; menaquinone biosynthesis; menaquinol from 1,4-dihydroxy-2-naphthoate: step 2/2. It functions in the pathway cofactor biosynthesis; ubiquinone biosynthesis. Methyltransferase required for the conversion of demethylmenaquinol (DMKH2) to menaquinol (MKH2) and the conversion of 2-polyprenyl-6-methoxy-1,4-benzoquinol (DDMQH2) to 2-polyprenyl-3-methyl-6-methoxy-1,4-benzoquinol (DMQH2). The protein is Ubiquinone/menaquinone biosynthesis C-methyltransferase UbiE of Cupriavidus metallidurans (strain ATCC 43123 / DSM 2839 / NBRC 102507 / CH34) (Ralstonia metallidurans).